An 82-amino-acid polypeptide reads, in one-letter code: Small ribosomal subunit protein bS16 (82 aa).

The protein belongs to the bacterial ribosomal protein bS16 family.

The polypeptide is Small ribosomal subunit protein bS16 (Deinococcus deserti (strain DSM 17065 / CIP 109153 / LMG 22923 / VCD115)).